Here is a 111-residue protein sequence, read N- to C-terminus: Small ribosomal subunit protein bS6 (111 aa).

The protein belongs to the bacterial ribosomal protein bS6 family.

Functionally, binds together with bS18 to 16S ribosomal RNA. This chain is Small ribosomal subunit protein bS6, found in Francisella tularensis subsp. tularensis (strain FSC 198).